The following is a 132-amino-acid chain: MIVRTLAEAEASDRRVTSENWESVRLLLKDDNMGFSFHITTIFEGADFEMHYKNHLESVFCMSGEGEVETLADGKVYPIKPGTIYILDKHDKHVLRATKEMKMACVFNPPVTGKEVHDESGAYPLEAEAIVD.

This sequence belongs to the ectoine synthase family.

It catalyses the reaction (2S)-4-acetamido-2-aminobutanoate = L-ectoine + H2O. It functions in the pathway amine and polyamine biosynthesis; ectoine biosynthesis; L-ectoine from L-aspartate 4-semialdehyde: step 3/3. Catalyzes the circularization of gamma-N-acetyl-alpha,gamma-diaminobutyric acid (ADABA) to ectoine (1,4,5,6-tetrahydro-2-methyl-4-pyrimidine carboxylic acid), which is an excellent osmoprotectant. This chain is L-ectoine synthase, found in Saccharophagus degradans (strain 2-40 / ATCC 43961 / DSM 17024).